A 228-amino-acid chain; its full sequence is Cytidylate kinase (228 aa).

17–25 (GPTASGKGT) contacts ATP.

Belongs to the cytidylate kinase family. Type 1 subfamily.

It localises to the cytoplasm. The catalysed reaction is CMP + ATP = CDP + ADP. The enzyme catalyses dCMP + ATP = dCDP + ADP. The chain is Cytidylate kinase from Burkholderia mallei (strain NCTC 10247).